Reading from the N-terminus, the 714-residue chain is Neutral ceramidase A (714 aa).

The signal sequence occupies residues 1 to 23; that stretch reads MKRSIVFIYSLVILLLSVGFIDA. 2 N-linked (GlcNAc...) asparagine glycosylation sites follow: N218 and N246. S293 serves as the catalytic Nucleophile. N-linked (GlcNAc...) asparagine glycans are attached at residues N353, N373, N416, N571, N610, and N700.

It belongs to the neutral ceramidase family.

The protein localises to the secreted. The catalysed reaction is an N-acylsphing-4-enine + H2O = sphing-4-enine + a fatty acid. In terms of biological role, hydrolyzes the sphingolipid ceramide into sphingosine and free fatty acid at an optimal pH of 3.0. Has no activity toward glycosphingolipids, such as GalCer and Galbeta1-3GalNAcbeta1-4(NeuAcalpha2-3)Galbeta1-4Glcbeta1-1'Cer or sphingomyelin. This chain is Neutral ceramidase A (dcd2A), found in Dictyostelium discoideum (Social amoeba).